Here is an 85-residue protein sequence, read N- to C-terminus: uncharacterized protein (85 aa).

Phosphoserine is present on Ser22.

Its subcellular location is the cytoplasm. It is found in the nucleus. This is an uncharacterized protein from Saccharomyces cerevisiae (strain ATCC 204508 / S288c) (Baker's yeast).